A 217-amino-acid polypeptide reads, in one-letter code: UPF0502 protein ETA_20480 (217 aa).

The interval 169–188 (GEVDESSRADGHHPDDHRGD) is disordered. The span at 173–188 (ESSRADGHHPDDHRGD) shows a compositional bias: basic and acidic residues.

The protein belongs to the UPF0502 family.

In Erwinia tasmaniensis (strain DSM 17950 / CFBP 7177 / CIP 109463 / NCPPB 4357 / Et1/99), this protein is UPF0502 protein ETA_20480.